We begin with the raw amino-acid sequence, 138 residues long: Holo-[acyl-carrier-protein] synthase (138 aa).

Mg(2+) contacts are provided by aspartate 8 and glutamate 54.

Belongs to the P-Pant transferase superfamily. AcpS family. It depends on Mg(2+) as a cofactor.

It localises to the cytoplasm. The catalysed reaction is apo-[ACP] + CoA = holo-[ACP] + adenosine 3',5'-bisphosphate + H(+). In terms of biological role, transfers the 4'-phosphopantetheine moiety from coenzyme A to a Ser of acyl-carrier-protein. The chain is Holo-[acyl-carrier-protein] synthase from Roseiflexus sp. (strain RS-1).